We begin with the raw amino-acid sequence, 316 residues long: 4-hydroxy-3-methylbut-2-enyl diphosphate reductase (316 aa).

Cysteine 12 is a binding site for [4Fe-4S] cluster. 2 residues coordinate (2E)-4-hydroxy-3-methylbut-2-enyl diphosphate: histidine 43 and histidine 81. Dimethylallyl diphosphate is bound by residues histidine 43 and histidine 81. 2 residues coordinate isopentenyl diphosphate: histidine 43 and histidine 81. Cysteine 103 serves as a coordination point for [4Fe-4S] cluster. Position 131 (histidine 131) interacts with (2E)-4-hydroxy-3-methylbut-2-enyl diphosphate. Histidine 131 provides a ligand contact to dimethylallyl diphosphate. Residue histidine 131 coordinates isopentenyl diphosphate. The active-site Proton donor is glutamate 133. Threonine 170 lines the (2E)-4-hydroxy-3-methylbut-2-enyl diphosphate pocket. Cysteine 198 serves as a coordination point for [4Fe-4S] cluster. (2E)-4-hydroxy-3-methylbut-2-enyl diphosphate contacts are provided by serine 226, asparagine 228, and serine 271. Positions 226, 228, and 271 each coordinate dimethylallyl diphosphate. Residues serine 226, asparagine 228, and serine 271 each contribute to the isopentenyl diphosphate site.

It belongs to the IspH family. [4Fe-4S] cluster is required as a cofactor.

It catalyses the reaction isopentenyl diphosphate + 2 oxidized [2Fe-2S]-[ferredoxin] + H2O = (2E)-4-hydroxy-3-methylbut-2-enyl diphosphate + 2 reduced [2Fe-2S]-[ferredoxin] + 2 H(+). It carries out the reaction dimethylallyl diphosphate + 2 oxidized [2Fe-2S]-[ferredoxin] + H2O = (2E)-4-hydroxy-3-methylbut-2-enyl diphosphate + 2 reduced [2Fe-2S]-[ferredoxin] + 2 H(+). It participates in isoprenoid biosynthesis; dimethylallyl diphosphate biosynthesis; dimethylallyl diphosphate from (2E)-4-hydroxy-3-methylbutenyl diphosphate: step 1/1. The protein operates within isoprenoid biosynthesis; isopentenyl diphosphate biosynthesis via DXP pathway; isopentenyl diphosphate from 1-deoxy-D-xylulose 5-phosphate: step 6/6. Catalyzes the conversion of 1-hydroxy-2-methyl-2-(E)-butenyl 4-diphosphate (HMBPP) into a mixture of isopentenyl diphosphate (IPP) and dimethylallyl diphosphate (DMAPP). Acts in the terminal step of the DOXP/MEP pathway for isoprenoid precursor biosynthesis. This is 4-hydroxy-3-methylbut-2-enyl diphosphate reductase from Bacillus mycoides (strain KBAB4) (Bacillus weihenstephanensis).